A 299-amino-acid chain; its full sequence is uncharacterized protein (299 aa).

A helical membrane pass occupies residues 25-45 (LLYFFKSLAMILFFIFFSLTS).

It is found in the membrane. This is an uncharacterized protein from Rickettsia prowazekii (strain Madrid E).